The following is a 147-amino-acid chain: Probable 4-amino-4-deoxy-L-arabinose-phosphoundecaprenol flippase subunit ArnF (147 aa).

Residues 1–23 (MSNDHPQGQLPASPARSALKGYL) lie on the Cytoplasmic side of the membrane. Residues 24-44 (YVLGSILLVTAAQLGMKWGVI) traverse the membrane as a helical segment. The Periplasmic segment spans residues 45-62 (QLPTWQMDLAVMLAHPLP). Residues 63–83 (LLVILAGVGCYALSLLCWLAA) form a helical membrane-spanning segment. The Cytoplasmic segment spans residues 84-93 (LHSTPLNIAY). The helical transmembrane segment at 94–114 (PLLSTSYALVYLLAVNIPLFA) threads the bilayer. Residues 115–121 (EPLEPGK) are Periplasmic-facing. The chain crosses the membrane as a helical span at residues 122–142 (ALGVLFILLGAVLVGIKPAAG). Residues 143-147 (TKQTG) lie on the Cytoplasmic side of the membrane.

It belongs to the ArnF family. As to quaternary structure, heterodimer of ArnE and ArnF.

It localises to the cell inner membrane. It functions in the pathway bacterial outer membrane biogenesis; lipopolysaccharide biosynthesis. Translocates 4-amino-4-deoxy-L-arabinose-phosphoundecaprenol (alpha-L-Ara4N-phosphoundecaprenol) from the cytoplasmic to the periplasmic side of the inner membrane. This is Probable 4-amino-4-deoxy-L-arabinose-phosphoundecaprenol flippase subunit ArnF from Aeromonas hydrophila subsp. hydrophila (strain ATCC 7966 / DSM 30187 / BCRC 13018 / CCUG 14551 / JCM 1027 / KCTC 2358 / NCIMB 9240 / NCTC 8049).